We begin with the raw amino-acid sequence, 648 residues long: Biosynthetic arginine decarboxylase (648 aa).

An N6-(pyridoxal phosphate)lysine modification is found at Lys109. Residue 291 to 301 participates in substrate binding; that stretch reads IDVGGGLGIDF.

Belongs to the Orn/Lys/Arg decarboxylase class-II family. SpeA subfamily. Requires Mg(2+) as cofactor. The cofactor is pyridoxal 5'-phosphate.

It carries out the reaction L-arginine + H(+) = agmatine + CO2. The protein operates within amine and polyamine biosynthesis; agmatine biosynthesis; agmatine from L-arginine: step 1/1. Catalyzes the biosynthesis of agmatine from arginine. The polypeptide is Biosynthetic arginine decarboxylase (Prochlorococcus marinus (strain AS9601)).